The chain runs to 269 residues: Polyamine aminopropyltransferase (269 aa).

In terms of domain architecture, PABS spans 1 to 226; that stretch reads MVWFFEYYDG…ALWSFIIGGE (226 aa). Q28 is a binding site for S-methyl-5'-thioadenosine. Positions 59 and 83 each coordinate spermidine. S-methyl-5'-thioadenosine-binding positions include D102 and 133 to 134; that span reads DG. The active-site Proton acceptor is the D150. Spermidine is bound at residue 150 to 153; that stretch reads DSTD.

The protein belongs to the spermidine/spermine synthase family. Homodimer or homotetramer.

The protein localises to the cytoplasm. It carries out the reaction S-adenosyl 3-(methylsulfanyl)propylamine + putrescine = S-methyl-5'-thioadenosine + spermidine + H(+). It participates in amine and polyamine biosynthesis; spermidine biosynthesis; spermidine from putrescine: step 1/1. Its function is as follows. Catalyzes the irreversible transfer of a propylamine group from the amino donor S-adenosylmethioninamine (decarboxy-AdoMet) to putrescine (1,4-diaminobutane) to yield spermidine. This chain is Polyamine aminopropyltransferase, found in Archaeoglobus fulgidus (strain ATCC 49558 / DSM 4304 / JCM 9628 / NBRC 100126 / VC-16).